The primary structure comprises 190 residues: FMN reductase (NADH) RutF (190 aa).

This sequence belongs to the non-flavoprotein flavin reductase family. RutF subfamily.

It catalyses the reaction FMNH2 + NAD(+) = FMN + NADH + 2 H(+). Functionally, catalyzes the reduction of FMN to FMNH2 which is used to reduce pyrimidine by RutA via the Rut pathway. This Pantoea ananatis (strain LMG 20103) protein is FMN reductase (NADH) RutF.